Reading from the N-terminus, the 328-residue chain is RNA-binding motif protein, X-linked 2 (328 aa).

Residue Lys8 forms a Glycyl lysine isopeptide (Lys-Gly) (interchain with G-Cter in SUMO2) linkage. One can recognise an RRM domain in the interval 36–114; sequence AWIFLGGLPY…RTIRVDHVAN (79 aa). The segment at 118-328 is disordered; it reads PQESEDVDDV…SFHASDRRHY (211 aa). A Phosphothreonine modification is found at Thr140. Ser149 is subject to Phosphoserine. Positions 157 to 172 are enriched in basic residues; it reads TKKPKKDKKEKKKKKE. Composition is skewed to basic and acidic residues over residues 192 to 219, 236 to 247, and 255 to 273; these read TVKETDEQSAKKHSSKPSERAQKSECRE, GRAEEPEWEAKK, and KPSSRREGEEKSRDKDRGR. A Glycyl lysine isopeptide (Lys-Gly) (interchain with G-Cter in SUMO2) cross-link involves residue Lys246. Ser274 is modified (phosphoserine). Residues 291-314 are compositionally biased toward basic residues; that stretch reads HRSRSRSRSRSPDRSHRHKKHRYS. A compositionally biased stretch (basic and acidic residues) spans 315 to 328; sequence HERESFHASDRRHY.

The protein belongs to the IST3 family. As to quaternary structure, part of the activated spliceosome B/catalytic step 1 spliceosome, one of the forms of the spliceosome which has a well-formed active site but still cannot catalyze the branching reaction and is composed of at least 52 proteins, the U2, U5 and U6 snRNAs and the pre-mRNA. Component of the minor spliceosome, which splices U12-type introns.

It localises to the nucleus. Its function is as follows. Involved in pre-mRNA splicing as component of the activated spliceosome. As a component of the minor spliceosome, involved in the splicing of U12-type introns in pre-mRNAs. This chain is RNA-binding motif protein, X-linked 2 (Rbmx2), found in Rattus norvegicus (Rat).